The sequence spans 472 residues: Ribosomal RNA small subunit methyltransferase F (472 aa).

S-adenosyl-L-methionine-binding positions include Ala-123 to Lys-129, Glu-147, Asp-174, and Asp-192. The Nucleophile role is filled by Cys-245.

It belongs to the class I-like SAM-binding methyltransferase superfamily. RsmB/NOP family.

Its subcellular location is the cytoplasm. The enzyme catalyses cytidine(1407) in 16S rRNA + S-adenosyl-L-methionine = 5-methylcytidine(1407) in 16S rRNA + S-adenosyl-L-homocysteine + H(+). Specifically methylates the cytosine at position 1407 (m5C1407) of 16S rRNA. The polypeptide is Ribosomal RNA small subunit methyltransferase F (Vibrio vulnificus (strain CMCP6)).